Here is a 247-residue protein sequence, read N- to C-terminus: MSGKDRIEIFPSRMAQTIMKARLKGAQTGRNLLKKKSDALTLRFRQILKKIIETKMLMGEVMREAAFSLAEAKFTAGDFSTTVIQNVNKAQVKIRAKKDNVAGVTLPVFEHYHEGTDSYELTGLARGGEQLAKLKRNYAKAVELLVELASLQTSFVTLDEAIKITNRRVNAIEHVIIPRIERTLAYIITELDEREREEFYRLKKIQEKKKIIKEKFEKDLERRRAAGEVMEPANLLAEEKDEDLLFE.

Belongs to the V-ATPase D subunit family. In terms of assembly, V-ATPase is a heteromultimeric enzyme made up of two complexes: the ATP-hydrolytic V1 complex and the proton translocation V0 complex. The V1 complex consists of three catalytic AB heterodimers that form a heterohexamer, three peripheral stalks each consisting of EG heterodimers, one central rotor including subunits D and F, and the regulatory subunits C and H. The proton translocation complex V0 consists of the proton transport subunit a, a ring of proteolipid subunits c9c'', rotary subunit d, subunits e and f, and the accessory subunits ATP6AP1/Ac45 and ATP6AP2/PRR. Interacts with SNX10.

The protein localises to the membrane. Its subcellular location is the cytoplasmic vesicle. It localises to the clathrin-coated vesicle membrane. The protein resides in the cytoplasm. It is found in the cytoskeleton. The protein localises to the microtubule organizing center. Its subcellular location is the centrosome. It localises to the cell projection. The protein resides in the cilium. Subunit of the V1 complex of vacuolar(H+)-ATPase (V-ATPase), a multisubunit enzyme composed of a peripheral complex (V1) that hydrolyzes ATP and a membrane integral complex (V0) that translocates protons. V-ATPase is responsible for acidifying and maintaining the pH of intracellular compartments and in some cell types, is targeted to the plasma membrane, where it is responsible for acidifying the extracellular environment. May play a role in cilium biogenesis through regulation of the transport and the localization of proteins to the cilium. The polypeptide is V-type proton ATPase subunit D (Atp6v1d) (Mus musculus (Mouse)).